Consider the following 100-residue polypeptide: MATYKVTLINEEEGINAILEVADDQTILDAGEEAGLDLPSSCRAGSCSTCAGKLVSGAAPNQDDQAFLDDDQLAAGWVMTCVAYPTGDCTIMTHQESEVL.

The 2Fe-2S ferredoxin-type domain maps to 4–97; sequence YKVTLINEEE…DCTIMTHQES (94 aa). Residues Cys-42, Cys-47, Cys-50, and Cys-81 each coordinate [2Fe-2S] cluster.

The protein belongs to the 2Fe2S plant-type ferredoxin family. [2Fe-2S] cluster is required as a cofactor.

In terms of biological role, ferredoxins are iron-sulfur proteins that transfer electrons in a wide variety of metabolic reactions. The chain is Ferredoxin-2 from Aphanothece sacrum.